The following is a 408-amino-acid chain: Glyceraldehyde-3-phosphate dehydrogenase, testis-specific (408 aa).

Residues 1 to 73 form a testis-specific N-terminal extension region; that stretch reads MSKRDIVLTN…TPPPKMVSVA (73 aa). The interval 19-68 is disordered; sequence QPCPVTRAPPPPEPKAEVEPQPQPEPTPVREEIKPPPPPLPPHPATPPPK. The segment covering 53 to 68 has biased composition (pro residues); the sequence is PPPPPLPPHPATPPPK. Residues 85-86, D106, K151, Y173, and S193 each bind NAD(+); that span reads RI. D-glyceraldehyde 3-phosphate is bound by residues 223–225, T254, 283–284, and R306; these read SCT and TG. The Nucleophile role is filled by C224. N388 is a binding site for NAD(+).

This sequence belongs to the glyceraldehyde-3-phosphate dehydrogenase family. Homotetramer. Interacts with ARRB2; the interaction is detected in the nucleus upon OR1D2 stimulation. As to expression, testis specific.

The protein resides in the cytoplasm. It catalyses the reaction D-glyceraldehyde 3-phosphate + phosphate + NAD(+) = (2R)-3-phospho-glyceroyl phosphate + NADH + H(+). It participates in carbohydrate degradation; glycolysis; pyruvate from D-glyceraldehyde 3-phosphate: step 1/5. May play an important role in regulating the switch between different pathways for energy production during spermiogenesis and in the spermatozoon. Required for sperm motility and male fertility. The chain is Glyceraldehyde-3-phosphate dehydrogenase, testis-specific (GAPDHS) from Homo sapiens (Human).